A 129-amino-acid polypeptide reads, in one-letter code: Ropporin-1 (129 aa).

An RIIa domain is found at P11–A34.

It belongs to the ropporin family. As to quaternary structure, homodimer. Interacts with AKAP3. May interact with SPA17. Interacts with RHPN1. Interacts with FSCB; the interaction increases upon spermatozoa capacitation conditions. Interacts with CFAP61. Post-translationally, sumoylated, sumoylation decreases upon spermatozoa capacitation conditions.

It is found in the cell projection. The protein localises to the cilium. It localises to the flagellum. Important for male fertility. With ROPN1L, involved in fibrous sheath integrity and sperm motility, plays a role in PKA-dependent signaling processes required for spermatozoa capacitation. The protein is Ropporin-1 of Mesocricetus auratus (Golden hamster).